Reading from the N-terminus, the 262-residue chain is S-methyl-5'-thioadenosine phosphorylase (262 aa).

Residues serine 12, 54–55 (RH), and 87–88 (SA) each bind phosphate. Methionine 185 lines the substrate pocket. Threonine 186 contacts phosphate. 209–211 (DYD) contacts substrate.

The protein belongs to the PNP/MTAP phosphorylase family. MTAP subfamily. As to quaternary structure, homohexamer. Dimer of a homotrimer.

It catalyses the reaction S-methyl-5'-thioadenosine + phosphate = 5-(methylsulfanyl)-alpha-D-ribose 1-phosphate + adenine. It participates in amino-acid biosynthesis; L-methionine biosynthesis via salvage pathway; S-methyl-5-thio-alpha-D-ribose 1-phosphate from S-methyl-5'-thioadenosine (phosphorylase route): step 1/1. Its function is as follows. Catalyzes the reversible phosphorylation of S-methyl-5'-thioadenosine (MTA) to adenine and 5-methylthioribose-1-phosphate. Involved in the breakdown of MTA, a major by-product of polyamine biosynthesis. Responsible for the first step in the methionine salvage pathway after MTA has been generated from S-adenosylmethionine. Has broad substrate specificity with 6-aminopurine nucleosides as preferred substrates. The protein is S-methyl-5'-thioadenosine phosphorylase of Thermofilum pendens (strain DSM 2475 / Hrk 5).